The primary structure comprises 348 residues: Phosphate acyltransferase (348 aa).

This sequence belongs to the PlsX family. As to quaternary structure, homodimer. Probably interacts with PlsY.

It localises to the cytoplasm. The catalysed reaction is a fatty acyl-[ACP] + phosphate = an acyl phosphate + holo-[ACP]. Its pathway is lipid metabolism; phospholipid metabolism. Functionally, catalyzes the reversible formation of acyl-phosphate (acyl-PO(4)) from acyl-[acyl-carrier-protein] (acyl-ACP). This enzyme utilizes acyl-ACP as fatty acyl donor, but not acyl-CoA. This Pectobacterium atrosepticum (strain SCRI 1043 / ATCC BAA-672) (Erwinia carotovora subsp. atroseptica) protein is Phosphate acyltransferase.